The sequence spans 315 residues: Protoheme IX farnesyltransferase (315 aa).

The next 9 membrane-spanning stretches (helical) occupy residues I38–P58, L62–M82, L111–W131, L132–L152, N159–T179, W184–L204, I233–T253, W255–L275, and L293–F313.

Belongs to the UbiA prenyltransferase family. Protoheme IX farnesyltransferase subfamily.

It is found in the cell membrane. It catalyses the reaction heme b + (2E,6E)-farnesyl diphosphate + H2O = Fe(II)-heme o + diphosphate. It participates in porphyrin-containing compound metabolism; heme O biosynthesis; heme O from protoheme: step 1/1. Converts heme B (protoheme IX) to heme O by substitution of the vinyl group on carbon 2 of heme B porphyrin ring with a hydroxyethyl farnesyl side group. This Streptomyces coelicolor (strain ATCC BAA-471 / A3(2) / M145) protein is Protoheme IX farnesyltransferase.